A 284-amino-acid polypeptide reads, in one-letter code: Putative L-ribulose-5-phosphate 3-epimerase UlaE (284 aa).

Belongs to the L-ribulose-5-phosphate 3-epimerase family.

It carries out the reaction L-ribulose 5-phosphate = L-xylulose 5-phosphate. The protein operates within cofactor degradation; L-ascorbate degradation; D-xylulose 5-phosphate from L-ascorbate: step 3/4. Its function is as follows. Catalyzes the isomerization of L-xylulose-5-phosphate to L-ribulose-5-phosphate. Is involved in the anaerobic L-ascorbate utilization. In Shigella dysenteriae serotype 1 (strain Sd197), this protein is Putative L-ribulose-5-phosphate 3-epimerase UlaE.